A 249-amino-acid polypeptide reads, in one-letter code: Ciliogenesis and planar polarity effector 2 (249 aa).

Residues 46 to 249 (PADVAAYKVF…VIAGLVGGAE (204 aa)) are small GTPase-like. GTP is bound by residues 58-65 (GKSGVGKT) and 171-174 (TKLD).

It belongs to the small GTPase superfamily. Rab family. In terms of assembly, interacts with fuz.

Its subcellular location is the cytoplasm. The protein localises to the cytoskeleton. It is found in the cilium basal body. Its function is as follows. Potential effector of the planar cell polarity signaling pathway. Plays a role in targeted membrane trafficking most probably at the level of vesicle fusion with membranes. Involved in cilium biogenesis by regulating the transport of cargo proteins to the basal body and to the apical tips of cilia. More generally involved in exocytosis in secretory cells. In Xenopus laevis (African clawed frog), this protein is Ciliogenesis and planar polarity effector 2.